Reading from the N-terminus, the 2197-residue chain is RNA1 polyprotein (2197 aa).

Residues 621 to 1167 (GLTDVFGVPL…YDWVYANGGK (547 aa)) lie on the Cytoplasmic side of the membrane. The 168-residue stretch at 766–933 (VKRLSDLHKR…EGVAYNPSDP (168 aa)) folds into the SF3 helicase domain. 796–803 (GGPRCGKS) is an ATP binding site. A helical membrane pass occupies residues 1168–1188 (LLLVLAAVILILFFGSACIKL). At 1189–1212 (MQAIFCGAAGGTVSMAAVGKMTVQ) the chain is on the lumenal side. An N-linked (GlcNAc...) asparagine; by host glycan is attached at asparagine 1228. Residues 1243-1475 (LAEAQFNESH…MPRYISHASF (233 aa)) enclose the Peptidase C3 domain. Active-site for picornain 3C-like protease activity residues include histidine 1283, glutamate 1331, and cysteine 1433. The 124-residue stretch at 1765-1888 (SVALNCDYSR…SIKPDTMKYF (124 aa)) folds into the RdRp catalytic domain.

It belongs to the nepoviruses RNA1 polyprotein family. Specific enzymatic cleavages by picornain 3C-like protease in vivo yield mature proteins. Picornain 3C-like protease is autocatalytically processed. NTB exists as NTB-VPg polyprotein as well as NTB mature protein. In terms of processing, VPg is uridylylated by the polymerase and is covalently linked to the 5'-end of genomic RNA. This uridylylated form acts as a nucleotide-peptide primer for the polymerase.

The protein resides in the host endoplasmic reticulum lumen. It is found in the host endoplasmic reticulum membrane. The catalysed reaction is RNA(n) + a ribonucleoside 5'-triphosphate = RNA(n+1) + diphosphate. Functionally, picornain 3C-like protease is a thiol protease that cleaves at Gln-|-Gly or Gln-|-Ser sites in the P1 and P2 polyproteins. In terms of biological role, the VPg-NTB polyprotein may act as a membrane-anchor for the replication complex. The sequence is that of RNA1 polyprotein from Tomato ringspot virus (isolate raspberry) (ToRSV).